A 517-amino-acid chain; its full sequence is MRLGGPWAWLLGLPTAVVYGSLALFVSVLHNVFLLYYVDTFVSVYKIDKAAFWVGETVFLLWNSLNDPLFGWLSDRQFLSSQPRSGAGLSSRAVVLARVRALGWHGPLLALSFLAFWVPWAPAGLQFLLCLCLYDGFLTLVDLHHHALLADLALSAHDRTHLNFYCSLFSAAGSLSVFASYAFWNKEDFSSFRAFCLALATGSGLGFVGAARLLRRRVEAAGREPGCPAMAVNDGLCEEELLVGGEEAGSITLGQYLQQLARHRNFLWFVGMDLVQVFHCHFNSNFFPLFLEHLLSDHISLSTGSFLLGISYVAPHLNNLYFLPLCRRWGVYAVVRGLFLLKLGLSLLMLLAGPDHPGLLCLFIASNRVFTEGTCKLLTLVVTDLVDEDLVLNHRKQAASALLFGMVALVTKPGQTFAPLLGTWLLCFYTGHDLFQQHPPAPVGSAQPWPEPPAPPPAQAPPLRQGCFYLLVLVPIACALLQLFTWSQFTLHGRRLHMVKAQRQSLSRAQTLDVKMV.

Residues methionine 1–leucine 11 are Extracellular-facing. The helical transmembrane segment at glycine 12 to serine 43 threads the bilayer. The Cytoplasmic segment spans residues valine 44–glycine 55. A helical membrane pass occupies residues glutamate 56–serine 74. Topologically, residues aspartate 75–arginine 100 are extracellular. Residues alanine 101–valine 118 form a helical membrane-spanning segment. Over proline 119–glutamine 126 the chain is Cytoplasmic. Residues phenylalanine 127 to aspartate 151 form a helical membrane-spanning segment. At leucine 152–serine 155 the chain is on the extracellular side. Residues alanine 156 to alanine 179 traverse the membrane as a helical segment. The Cytoplasmic portion of the chain corresponds to serine 180–serine 191. The helical transmembrane segment at phenylalanine 192–arginine 223 threads the bilayer. Residues glutamate 224 to arginine 264 are Extracellular-facing. A helical transmembrane segment spans residues asparagine 265 to glutamate 292. Residues histidine 293–serine 305 are Cytoplasmic-facing. The chain crosses the membrane as a helical span at residues phenylalanine 306–leucine 325. Over cysteine 326 to glycine 330 the chain is Extracellular. Residues valine 331–leucine 350 form a helical membrane-spanning segment. At leucine 351–glycine 358 the chain is on the cytoplasmic side. The helical transmembrane segment at leucine 359–asparagine 393 threads the bilayer. Residues histidine 394–leucine 402 lie on the Extracellular side of the membrane. A helical membrane pass occupies residues leucine 403–tyrosine 429. The Cytoplasmic portion of the chain corresponds to threonine 430–glycine 466. A helical membrane pass occupies residues cysteine 467 to threonine 485. Over tryptophan 486–valine 517 the chain is Extracellular.

Its subcellular location is the cell membrane. The sequence is that of Transmembrane protein 180 from Bos taurus (Bovine).